A 466-amino-acid chain; its full sequence is Zinc finger protein NUTCRACKER (466 aa).

Over residues 1 to 23 (MTSEVLQTISSGSGFAQPQSSST) the composition is skewed to polar residues. The interval 1 to 29 (MTSEVLQTISSGSGFAQPQSSSTLDHDES) is disordered. At serine 56 the chain carries Phosphoserine. The segment at 66–88 (FLCEVCGKGFQRDQNLQLHRRGH) adopts a C2H2-type 1 zinc-finger fold. Threonine 98 carries the phosphothreonine; by KIN10 modification. The segment at 107–137 (YVCPEKTCVHHHSSRALGDLTGIKKHFCRKH) adopts a C2H2-type 2 zinc-finger fold. Residues 134–141 (CRKHGEKK) carry the Nuclear localization signal motif. Residues 142–165 (WTCEKCAKRYAVQSDWKAHSKTCG) form a C2H2-type 2; degenerate zinc finger. 6 residues coordinate Zn(2+): cysteine 144, cysteine 147, histidine 160, cysteine 164, cysteine 171, and cysteine 173. Residues 169–192 (YRCDCGTIFSRRDSFITHRAFCDA) form a CCHC-type 2; atypical zinc finger. A phosphoserine; by KIN10 mark is found at serine 178 and serine 182. The SHR-binding stretch occupies residues 179-191 (RRDSFITHRAFCD). Residues histidine 186 and cysteine 190 each contribute to the Zn(2+) site.

In terms of assembly, interacts with AKIN10. Inhibition of transcription factor activity by KIN10-mediated phosphorylation at Thr-98, Ser-178 and Ser-182 under sugar deprivation conditions, thus delaying flowering. As to expression, highly expressed in vegetative organs and at lower levels in flowers and siliques. Expressed predominantly in roots. In roots, present in cortex, endodermis, and pericycle layer.

The protein localises to the nucleus. In terms of biological role, transcription activator that binds to the DNA sequence 5'-CTTTTGTCC-3'. Regulates photoperiodic flowering by modulating sugar transport and metabolism. Regulates SUS1 and SUS4. Transcription factor that regulates tissue boundaries and asymmetric cell division. Contributes to the sequestration of 'SHORT-ROOT' to the nucleus. The sequence is that of Zinc finger protein NUTCRACKER from Arabidopsis thaliana (Mouse-ear cress).